A 247-amino-acid polypeptide reads, in one-letter code: C-type lectin domain family 7 member A (247 aa).

Residues 1-44 (MEYQSSVENLDEDGYTQLDFSSRNITRRSVVSEKGLCAASSHWR) lie on the Cytoplasmic side of the membrane. Positions 15 to 18 (YTQL) match the ITAM-like motif. Residues 45-65 (LIAVTLGILCSVMLVITVVLS) traverse the membrane as a helical; Signal-anchor for type II membrane protein segment. Residues 66–247 (TSGIWRSSSG…YSICEKKLSV (182 aa)) are Extracellular-facing. Residues 81 to 101 (SDSFPSRNKDNQSQPTQSSLE) are compositionally biased toward polar residues. A disordered region spans residues 81-103 (SDSFPSRNKDNQSQPTQSSLEDS). Asparagine 91 carries N-linked (GlcNAc...) asparagine glycosylation. Cystine bridges form between cysteine 120-cysteine 131, cysteine 148-cysteine 241, and cysteine 220-cysteine 233. The C-type lectin domain maps to 127 to 242 (HEDSCYLFST…CSVHSYSICE (116 aa)). 146–153 (RQCFQLGS) contributes to the (1,3-beta-D-glucosyl)n binding site. The a divalent metal cation site is built by lysine 157, aspartate 159, and glutamate 163. Residue glutamate 195 coordinates (1,3-beta-D-glucosyl)n. An a divalent metal cation-binding site is contributed by glutamate 242.

Homodimer. Interacts with SYK; participates in leukocyte activation in presence of fungal pathogens. Interacts with CD37; this interaction controls CLEC7A-mediated IL-6 production. Post-translationally, phosphorylated on tyrosine residues in response to beta-glucan binding. Detected in bone marrow, monocytes, macrophages, dendritic cells and natural killer cells.

It localises to the cell membrane. Its function is as follows. Lectin that functions as a pattern recognizing receptor (PRR) specific for beta-1,3-linked and beta-1,6-linked glucans, which constitute cell wall constituents from pathogenic bacteria and fungi. Necessary for the TLR2-mediated inflammatory response and activation of NF-kappa-B: upon beta-glucan binding, recruits SYK via its ITAM motif and promotes a signaling cascade that activates some CARD domain-BCL10-MALT1 (CBM) signalosomes, leading to the activation of NF-kappa-B and MAP kinase p38 (MAPK11, MAPK12, MAPK13 and/or MAPK14) pathways which stimulate expression of genes encoding pro-inflammatory cytokines and chemokines. Enhances cytokine production in macrophages and dendritic cells. Mediates production of reactive oxygen species in the cell. Mediates phagocytosis of C.albicans conidia. Binds T-cells in a way that does not involve their surface glycans and plays a role in T-cell activation. Stimulates T-cell proliferation. Induces phosphorylation of SCIMP after binding beta-glucans. The chain is C-type lectin domain family 7 member A (CLEC7A) from Bos taurus (Bovine).